A 168-amino-acid polypeptide reads, in one-letter code: Diphosphoinositol polyphosphate phosphohydrolase 1 (168 aa).

An N-acetylmethionine modification is found at Met1. Substrate-binding positions include Arg10, 18 to 20 (KKR), and 39 to 41 (SSR). The region spanning 17 to 144 (YKKRAACLCF…VQASYFETLR (128 aa)) is the Nudix hydrolase domain. Mg(2+) contacts are provided by Gly50 and Glu66. The Nudix box signature appears at 51–72 (GGMEPEEEPSVAAVREVCEEAG). Glu69 functions as the Proton acceptor in the catalytic mechanism. Position 70 (Glu70) interacts with Mg(2+). Substrate is bound by residues 89 to 91 (RKH), Arg115, and Lys133.

The protein belongs to the Nudix hydrolase family. DIPP subfamily. Monomer. Mg(2+) serves as cofactor. The cofactor is Mn(2+). It depends on Zn(2+) as a cofactor. Present in heart, lung, liver and spleen (at protein level). Widely expressed.

It localises to the cytoplasm. The protein localises to the nucleus. It carries out the reaction diphospho-myo-inositol polyphosphate + H2O = myo-inositol polyphosphate + phosphate.. It catalyses the reaction 5-diphospho-1D-myo-inositol 1,2,3,4,6-pentakisphosphate + H2O = 1D-myo-inositol hexakisphosphate + phosphate + H(+). The enzyme catalyses 3,5-bis(diphospho)-1D-myo-inositol 1,2,4,6-tetrakisphosphate + H2O = 3-diphospho-1D-myo-inositol 1,2,4,5,6-pentakisphosphate + phosphate + 2 H(+). The catalysed reaction is [phosphate](n+1) + n H2O = (n+1) phosphate + n H(+). It carries out the reaction P(1),P(5)-bis(5'-adenosyl) pentaphosphate + H2O = ADP + ATP + 2 H(+). It catalyses the reaction P(1),P(6)-bis(5'-adenosyl) hexaphosphate + H2O = 2 ATP + 2 H(+). The enzyme catalyses P(1),P(4)-bis(5'-adenosyl) tetraphosphate + H2O = AMP + ATP + 2 H(+). The catalysed reaction is a 5'-end (N(7)-methyl 5'-triphosphoguanosine)-ribonucleoside in mRNA + H2O = N(7)-methyl-GMP + a 5'-end diphospho-ribonucleoside in mRNA + 2 H(+). It carries out the reaction a 5'-end (N(7)-methyl 5'-triphosphoguanosine)-ribonucleoside in mRNA + H2O = N(7)-methyl-GDP + a 5'-end phospho-ribonucleoside in mRNA + 2 H(+). Cleaves a beta-phosphate from the diphosphate groups in PP-InsP5 (diphosphoinositol pentakisphosphate) and [PP]2-InsP4 (bisdiphosphoinositol tetrakisphosphate), suggesting that it may play a role in signal transduction. InsP6 (inositol hexakisphosphate) is not a substrate. Also able to catalyze the hydrolysis of dinucleoside oligophosphates, with diadenosine 5',5'''-P1,P6-hexaphosphate (Ap6A) and diadenosine 5',5'''- P1,P5-pentaphosphate (Ap5A) being the preferred substrates. The major reaction products are ADP and p4a from Ap6A and ADP and ATP from Ap5A. Also able to hydrolyze 5- phosphoribose 1-diphosphate. Acts as a negative regulator of the ERK1/2 pathway. Acts as a decapping enzyme that can hydrolyze both monomethylated and unmethylated capped RNAs. Hydrolyzes monomethylated capped RNA after both the alpha- and beta-phosphates generating m7GMP + ppRNA and m7GDP + pRNA. Modulates the stability of a subset of mRNAs implicated in cell motility. Divalent cations zinc, magnesium and manganese determine its substrate specificity. Exhibits diphosphoinositol polyphosphate phosphohydrolase in the presence of magnesium ions, diadenosine hexaphosphate hydrolase activity in the presence of manganese ions and endopolyphosphatase activity in the presence of zinc ions. Plays an important role in limiting DNA damage and maintaining cell survival upon oxidative stress via its endopolyphosphatase activity. In Mus musculus (Mouse), this protein is Diphosphoinositol polyphosphate phosphohydrolase 1.